Here is a 369-residue protein sequence, read N- to C-terminus: Phosphate acyltransferase (369 aa).

It belongs to the PlsX family. Homodimer. Probably interacts with PlsY.

The protein resides in the cytoplasm. The enzyme catalyses a fatty acyl-[ACP] + phosphate = an acyl phosphate + holo-[ACP]. It participates in lipid metabolism; phospholipid metabolism. In terms of biological role, catalyzes the reversible formation of acyl-phosphate (acyl-PO(4)) from acyl-[acyl-carrier-protein] (acyl-ACP). This enzyme utilizes acyl-ACP as fatty acyl donor, but not acyl-CoA. In Gluconobacter oxydans (strain 621H) (Gluconobacter suboxydans), this protein is Phosphate acyltransferase.